The chain runs to 175 residues: Albumin-1 (175 aa).

A disulfide bond links cysteine 135 and cysteine 141.

It belongs to the protease inhibitor I3 (leguminous Kunitz-type inhibitor) family.

2S seed storage protein. This is Albumin-1 from Psophocarpus tetragonolobus (Winged bean).